Consider the following 450-residue polypeptide: Phosphoglucosamine mutase (450 aa).

Serine 101 serves as the catalytic Phosphoserine intermediate. Residues serine 101, aspartate 240, aspartate 242, and aspartate 244 each contribute to the Mg(2+) site. Phosphoserine is present on serine 101.

This sequence belongs to the phosphohexose mutase family. Mg(2+) serves as cofactor. Post-translationally, activated by phosphorylation. Phosphorylated by StkP in vivo.

The enzyme catalyses alpha-D-glucosamine 1-phosphate = D-glucosamine 6-phosphate. Functionally, catalyzes the conversion of glucosamine-6-phosphate to glucosamine-1-phosphate. The sequence is that of Phosphoglucosamine mutase from Streptococcus pneumoniae (strain ATCC BAA-255 / R6).